A 75-amino-acid chain; its full sequence is Large ribosomal subunit protein bL28c (75 aa).

This sequence belongs to the bacterial ribosomal protein bL28 family.

Its subcellular location is the plastid. It localises to the chloroplast. The polypeptide is Large ribosomal subunit protein bL28c (Cyanidioschyzon merolae (strain NIES-3377 / 10D) (Unicellular red alga)).